A 180-amino-acid polypeptide reads, in one-letter code: Beta-lactoglobulin-1/B (180 aa).

Residues 1–18 (MKCLLLALGLALACGVQA) form the signal peptide. 3 disulfide bridges follow: C84-C178, C124-C137, and C124-C139.

It belongs to the calycin superfamily. Lipocalin family. Under physiological conditions beta-lactoglobulin exists as an equilibrium mixture of monomeric and dimeric forms. Post-translationally, alternate disulfide bonds occur in equal amounts.

It localises to the secreted. Functionally, lactoglobulin is the primary component of whey, it binds retinol and is probably involved in the transport of that molecule. The protein is Beta-lactoglobulin-1/B of Ovis aries (Sheep).